Reading from the N-terminus, the 366-residue chain is Fructose-bisphosphate aldolase 1 (366 aa).

Substrate-binding residues include arginine 56 and lysine 147. Glutamate 189 (proton acceptor) is an active-site residue. Residue lysine 231 is the Schiff-base intermediate with dihydroxyacetone-P of the active site.

The protein belongs to the class I fructose-bisphosphate aldolase family. Ubiquitous.

The enzyme catalyses beta-D-fructose 1,6-bisphosphate = D-glyceraldehyde 3-phosphate + dihydroxyacetone phosphate. Its pathway is carbohydrate degradation; glycolysis; D-glyceraldehyde 3-phosphate and glycerone phosphate from D-glucose: step 4/4. Its function is as follows. May be involved in the metabolism of fructose-bisphosphate (beta-D-fructose 1,6-bisphosphate) and of fructose 1-phosphate. The protein is Fructose-bisphosphate aldolase 1 (aldo-1) of Caenorhabditis elegans.